The following is a 184-amino-acid chain: Homeobox protein LOX10 (184 aa).

2 disordered regions span residues 1–29 (KIVSRWMGSQNNHQQTHPNHHHHLPPLQH) and 129–184 (YKTK…NKPG). A DNA-binding region (homeobox) is located at residues 76 to 135 (RRKRRILFSQAQIYELERRFRQQKYLSAPEREHLATFIGLTPTQVKIWFQNHRYKTKKSK). Composition is skewed to low complexity over residues 140 to 161 (NSPSSSSMTSSSSASNKVASTT) and 174 to 184 (SNTTNNNNKPG).

This sequence belongs to the NK-2 homeobox family. Expressed in a segmental pattern in the endoderm and in the cephalic nervous system.

The protein resides in the nucleus. In terms of biological role, may play a role in patterning the gut. This Helobdella triserialis (Leech) protein is Homeobox protein LOX10 (LOX10).